Reading from the N-terminus, the 197-residue chain is Heart- and neural crest derivatives-expressed protein 1 (197 aa).

Disordered stretches follow at residues 61–94 (VVGP…RRTE) and 155–184 (VDGK…KGRT). Residues 78–90 (LGRRKGAPPKKER) show a composition bias toward basic residues. The 53-residue stretch at 80–132 (RRKGAPPKKERRRTESINSAFAELRECIPNVPADTKLSKIKTLRLATSYIGYL) folds into the bHLH domain.

In terms of assembly, efficient DNA binding requires dimerization with another bHLH protein. In terms of tissue distribution, highly expressed in the adult heart and expressed at lower levels in the intestine and gall bladder.

The protein resides in the nucleus. The protein localises to the nucleolus. Plays an essential role in cardiac morphogenesis. The sequence is that of Heart- and neural crest derivatives-expressed protein 1 (hand1) from Xenopus laevis (African clawed frog).